Consider the following 147-residue polypeptide: SPI-1 type 3 secretion system pilotin (147 aa).

A signal peptide spans 1–15; the sequence is MKKFYSCLPVFLLIG. Cysteine 16 carries the N-palmitoyl cysteine lipid modification. Cysteine 16 is lipidated: S-diacylglycerol cysteine.

The protein belongs to the InvH family.

It localises to the cell outer membrane. Its function is as follows. Involved in the synthesis of the type III secretion system (T3SS), also called injectisome, which is used to inject bacterial effector proteins into eukaryotic host cells. Pilot protein that is required for the proper localization of the secretin InvG/SctC in the outer membrane. Necessary for efficient adherence and entry of these organisms into cultured epithelial cells. This chain is SPI-1 type 3 secretion system pilotin, found in Salmonella typhimurium (strain SL1344).